Consider the following 175-residue polypeptide: ATP synthase subunit b (175 aa).

The helical transmembrane segment at Leu13–Leu33 threads the bilayer.

It belongs to the ATPase B chain family. F-type ATPases have 2 components, F(1) - the catalytic core - and F(0) - the membrane proton channel. F(1) has five subunits: alpha(3), beta(3), gamma(1), delta(1), epsilon(1). F(0) has four main subunits: a(1), b(2) and c(10-14). The alpha and beta chains form an alternating ring which encloses part of the gamma chain. F(1) is attached to F(0) by a central stalk formed by the gamma and epsilon chains, while a peripheral stalk is formed by the delta and b chains.

It localises to the cell inner membrane. Its function is as follows. F(1)F(0) ATP synthase produces ATP from ADP in the presence of a proton or sodium gradient. F-type ATPases consist of two structural domains, F(1) containing the extramembraneous catalytic core and F(0) containing the membrane proton channel, linked together by a central stalk and a peripheral stalk. During catalysis, ATP synthesis in the catalytic domain of F(1) is coupled via a rotary mechanism of the central stalk subunits to proton translocation. Functionally, component of the F(0) channel, it forms part of the peripheral stalk, linking F(1) to F(0). This Chloroherpeton thalassium (strain ATCC 35110 / GB-78) protein is ATP synthase subunit b.